The primary structure comprises 535 residues: MATCIWLRSCGARRLGWTFPGCRLRPRAGGLVPASGPAPGPAQLRCYAGGLAGLSAALLRTDSFVGGRWLPAAATFPVQDPASGAALGMVADCGVREARAAVRAAYEAFCCWREVSAKERSSLLRKWYNLMIQNKDDLARIITAESGKPLKEAHGEILYSAFFLEWFSEEARRVYGDIIYTPAKDRRALVLKQPIGVAAVITPWNFPSAMITRKVGAALAAGCTVVVKPAEDTPFSALALAELASQAGIPSGVYNVIPCSRKNAKEVGEAICTDPLVSKISFTGSTTTGKILLHHAANSVKRVSMELGGLAPFIVFDSANVDQAVAGAMASKFRNTGQTCVCSNQFLVQRGIHDAFVKAFAEAMKKNLRVGNGFEEGTTQGPLINEKAVEKVEKQVNDAVSKGATVVTGGKRHQLGKNFFEPTLLCNVTQDMLCTHEETFGPLAPVIKFDTEEEAIAIANAADVGLAGYFYSQDPAQIWRVAEQLEVGMVGVNEGLISSVECPFGGVKQSGLGREGSKYGIDEYLELKYVCYGGL.

The transit peptide at 1–47 (MATCIWLRSCGARRLGWTFPGCRLRPRAGGLVPASGPAPGPAQLRCY) directs the protein to the mitochondrion. Lysine 126 is modified (N6-acetyllysine; alternate). Lysine 126 is modified (N6-succinyllysine; alternate). An N6-succinyllysine mark is found at lysine 135 and lysine 184. NAD(+)-binding positions include arginine 213 and 228–231 (KPAE). Arginine 213 contributes to the substrate binding site. Residue lysine 265 is modified to N6-acetyllysine; alternate. An N6-succinyllysine; alternate modification is found at lysine 265. NAD(+) is bound at residue 284–289 (GSTTTG). Glutamate 306 functions as the Proton acceptor in the catalytic mechanism. Position 334 (arginine 334) interacts with substrate. Cysteine 340 serves as the catalytic Nucleophile. Cysteine 340 and cysteine 342 form a disulfide bridge. An N6-acetyllysine modification is found at lysine 365. Lysine 402 carries the post-translational modification N6-succinyllysine. The residue at position 411 (lysine 411) is an N6-acetyllysine. Serine 498 provides a ligand contact to substrate. Serine 499 is modified (phosphoserine).

Belongs to the aldehyde dehydrogenase family. As to quaternary structure, homotetramer.

The protein localises to the mitochondrion. The enzyme catalyses succinate semialdehyde + NAD(+) + H2O = succinate + NADH + 2 H(+). It participates in amino-acid degradation; 4-aminobutanoate degradation. Redox-regulated. Inhibited under oxydizing conditions. Functionally, catalyzes one step in the degradation of the inhibitory neurotransmitter gamma-aminobutyric acid (GABA). The chain is Succinate-semialdehyde dehydrogenase, mitochondrial (ALDH5A1) from Pan paniscus (Pygmy chimpanzee).